The following is a 24-amino-acid chain: U4-ctenitoxin-Co1b (24 aa).

Post-translationally, disulfide bonds are present. As to expression, expressed by the venom gland.

It localises to the secreted. Functionally, omega-agatoxins are antagonists of voltage-gated calcium channels (Cav). In Ctenus ornatus (Brazilian spider), this protein is U4-ctenitoxin-Co1b.